A 432-amino-acid polypeptide reads, in one-letter code: Homogentisate 1,2-dioxygenase (432 aa).

The Proton acceptor role is filled by histidine 286. The Fe cation site is built by histidine 329 and glutamate 335. Homogentisate contacts are provided by tyrosine 344 and histidine 365. Histidine 365 is a Fe cation binding site.

Belongs to the homogentisate dioxygenase family. Hexamer; dimer of trimers. Fe cation is required as a cofactor.

It catalyses the reaction homogentisate + O2 = 4-maleylacetoacetate + H(+). It functions in the pathway amino-acid degradation; L-phenylalanine degradation; acetoacetate and fumarate from L-phenylalanine: step 4/6. Functionally, involved in the catabolism of homogentisate (2,5-dihydroxyphenylacetate or 2,5-OH-PhAc), a central intermediate in the degradation of phenylalanine and tyrosine. Catalyzes the oxidative ring cleavage of the aromatic ring of homogentisate to yield maleylacetoacetate. This chain is Homogentisate 1,2-dioxygenase, found in Bordetella petrii (strain ATCC BAA-461 / DSM 12804 / CCUG 43448).